Reading from the N-terminus, the 147-residue chain is uncharacterized protein (147 aa).

The interval 110–133 is disordered; that stretch reads VLEPPTPSQPAPTPEPAVKPQPIA. Over residues 113-128 the composition is skewed to pro residues; it reads PPTPSQPAPTPEPAVK.

This is an uncharacterized protein from Ictalurid herpesvirus 1 (strain Auburn) (IcHV-1).